The chain runs to 285 residues: Tropomyosin alpha-3 chain (285 aa).

A coiled-coil region spans residues 1–285 (MMEAIKKKMQ…DHALNDMTSI (285 aa)). An N-acetylmethionine modification is found at Met2. The residue at position 2 (Met2) is an N-acetylalanine. At Thr54 the chain carries Phosphothreonine. 2 positions are modified to phosphoserine: Ser62 and Ser88. Thr109 carries the phosphothreonine modification. A phosphoserine mark is found at Ser207 and Ser216. At Ile228 the chain carries N6-acetyllysine. Thr253 is modified (phosphothreonine). At Tyr262 the chain carries Phosphotyrosine. At Ser272 the chain carries Phosphoserine. Residue Thr283 is modified to Phosphothreonine. A Phosphoserine modification is found at Ser284.

Belongs to the tropomyosin family. Homodimer. Heterodimer of an alpha (TPM1, TPM3 or TPM4) and a beta (TPM2) chain. Interacts with TMOD1. Interacts with TNNT1.

Its subcellular location is the cytoplasm. The protein localises to the cytoskeleton. Functionally, binds to actin filaments in muscle and non-muscle cells. Plays a central role, in association with the troponin complex, in the calcium dependent regulation of vertebrate striated muscle contraction. Smooth muscle contraction is regulated by interaction with caldesmon. In non-muscle cells is implicated in stabilizing cytoskeleton actin filaments. The protein is Tropomyosin alpha-3 chain (Tpm3) of Mus musculus (Mouse).